The sequence spans 330 residues: 5-dehydro-2-deoxygluconokinase (330 aa).

The protein belongs to the carbohydrate kinase PfkB family.

The catalysed reaction is 5-dehydro-2-deoxy-D-gluconate + ATP = 6-phospho-5-dehydro-2-deoxy-D-gluconate + ADP + H(+). The protein operates within polyol metabolism; myo-inositol degradation into acetyl-CoA; acetyl-CoA from myo-inositol: step 5/7. Functionally, catalyzes the phosphorylation of 5-dehydro-2-deoxy-D-gluconate (2-deoxy-5-keto-D-gluconate or DKG) to 6-phospho-5-dehydro-2-deoxy-D-gluconate (DKGP). This is 5-dehydro-2-deoxygluconokinase from Bacillus velezensis (strain DSM 23117 / BGSC 10A6 / LMG 26770 / FZB42) (Bacillus amyloliquefaciens subsp. plantarum).